The primary structure comprises 585 residues: Proline--tRNA ligase (585 aa).

It belongs to the class-II aminoacyl-tRNA synthetase family. ProS type 1 subfamily. As to quaternary structure, homodimer.

Its subcellular location is the cytoplasm. It catalyses the reaction tRNA(Pro) + L-proline + ATP = L-prolyl-tRNA(Pro) + AMP + diphosphate. In terms of biological role, catalyzes the attachment of proline to tRNA(Pro) in a two-step reaction: proline is first activated by ATP to form Pro-AMP and then transferred to the acceptor end of tRNA(Pro). As ProRS can inadvertently accommodate and process non-cognate amino acids such as alanine and cysteine, to avoid such errors it has two additional distinct editing activities against alanine. One activity is designated as 'pretransfer' editing and involves the tRNA(Pro)-independent hydrolysis of activated Ala-AMP. The other activity is designated 'posttransfer' editing and involves deacylation of mischarged Ala-tRNA(Pro). The misacylated Cys-tRNA(Pro) is not edited by ProRS. The protein is Proline--tRNA ligase of Mycolicibacterium vanbaalenii (strain DSM 7251 / JCM 13017 / BCRC 16820 / KCTC 9966 / NRRL B-24157 / PYR-1) (Mycobacterium vanbaalenii).